The chain runs to 100 residues: UPF0235 protein Cvib_0403 (100 aa).

This sequence belongs to the UPF0235 family.

The sequence is that of UPF0235 protein Cvib_0403 from Chlorobium phaeovibrioides (strain DSM 265 / 1930) (Prosthecochloris vibrioformis (strain DSM 265)).